Consider the following 435-residue polypeptide: Nuclear hormone receptor family member nhr-14 (435 aa).

A DNA-binding region (nuclear receptor) is located at residues 17–92 (ADFCVVCGDK…DGMKPEAIQN (76 aa)). 2 NR C4-type zinc fingers span residues 20-40 (CVVC…CNGC) and 56-80 (CRFN…FQKC). Residues 91 to 126 (QNERDRIGSTKRRKRSGANSENNSDSEGTPSPKIEV) form a disordered region. A compositionally biased stretch (polar residues) spans 107–119 (GANSENNSDSEGT). Residues 131 to 355 (VSRKLIEMLL…KRDTISPKIE (225 aa)) form the NR LBD domain.

It belongs to the nuclear hormone receptor family. Expressed in intestine and head neurons in young adults.

It localises to the nucleus. Orphan nuclear receptor. Transcriptional repressor of intestinal metal transporter smf-3 and genes of the innate immune response. Inhibits nuclear localization of transcription factor pqm-1; in response to pathogen stress, may facilitate translocation of pqm-1, leading to transcriptional activation of genes involved in innate immunity and iron uptake. The sequence is that of Nuclear hormone receptor family member nhr-14 (nhr-14) from Caenorhabditis elegans.